The sequence spans 717 residues: MNEFSLFASCPKGLEYVLADELKTLGAEVLRTNPAGVEAKVDLAGAYRICLGSRLANRVLRLLQSTRTATRDGLYQAASEVNWSEHLRPGESYWIAAFGSSGDIRHSRFGAQVVKDAINDHFRDRDLELPVIDKRSGVQTVQLNLAKTITLGLDLAGRSLHQRGYRQEGAAAPLKENLAAAILYRAGWPEICGEDGCFVDPMCGSGTLVVEAAMIAMNIAPGLLNPHFLFEKAPWHDPEVWRGVYEEAMEKAVLGKRRWRGAIFGCDLNPAAIRTAKRNLSRAGLDRWVKLETASAMDFTPDTEGCGQRLLVCNPPYGERLGQELELRSLYRALGRRLKTAYGEWKAGIFTSSVNLAKEIGLRADKQYHLYNGPLATTLYLFDVYGNRPEAETPRKPQNASLEGISEQAQMFRNRLSKNLAKWSKWAKKQQLSAYRIYDADMPEYAVAIDWYDGGIIVQEYAPPKSVDEEKARQRLLDVLEVTPAVLGIDGGQLFLKQRKKQKGMLQYEKTDSSRKERTVEEHGCRFWVNLSDYLDSGLFLDHRPTRYWIQKHSSGKRFLNLFCYTGAASVHAAAGGAATTTSVDMSQTYLSWAERNFHLNKLSGPHRFVRANVLDWLKAEHNSYDLIFLDPPTFSNSKKMEDVLDIQRDHAGLIEDCMRLLAPGGVLIFSCNYRRFKLDSGIEQRFAVENHTAASIPEDFKRNERIHQCWHIRHSA.

The THUMP domain occupies 45–142 (GAYRICLGSR…DKRSGVQTVQ (98 aa)).

It belongs to the methyltransferase superfamily. RlmKL family.

The protein localises to the cytoplasm. It carries out the reaction guanosine(2445) in 23S rRNA + S-adenosyl-L-methionine = N(2)-methylguanosine(2445) in 23S rRNA + S-adenosyl-L-homocysteine + H(+). It catalyses the reaction guanosine(2069) in 23S rRNA + S-adenosyl-L-methionine = N(2)-methylguanosine(2069) in 23S rRNA + S-adenosyl-L-homocysteine + H(+). In terms of biological role, specifically methylates the guanine in position 2445 (m2G2445) and the guanine in position 2069 (m7G2069) of 23S rRNA. This Hahella chejuensis (strain KCTC 2396) protein is Ribosomal RNA large subunit methyltransferase K/L.